The following is a 388-amino-acid chain: Succinate--CoA ligase [ADP-forming] subunit beta (388 aa).

The ATP-grasp domain occupies K9 to Q244. Residues K46, G53–G55, E99, T102, and E107 each bind ATP. The Mg(2+) site is built by N199 and D213. Substrate-binding positions include N264 and G321–V323.

The protein belongs to the succinate/malate CoA ligase beta subunit family. As to quaternary structure, heterotetramer of two alpha and two beta subunits. The cofactor is Mg(2+).

The catalysed reaction is succinate + ATP + CoA = succinyl-CoA + ADP + phosphate. It carries out the reaction GTP + succinate + CoA = succinyl-CoA + GDP + phosphate. The protein operates within carbohydrate metabolism; tricarboxylic acid cycle; succinate from succinyl-CoA (ligase route): step 1/1. Functionally, succinyl-CoA synthetase functions in the citric acid cycle (TCA), coupling the hydrolysis of succinyl-CoA to the synthesis of either ATP or GTP and thus represents the only step of substrate-level phosphorylation in the TCA. The beta subunit provides nucleotide specificity of the enzyme and binds the substrate succinate, while the binding sites for coenzyme A and phosphate are found in the alpha subunit. The chain is Succinate--CoA ligase [ADP-forming] subunit beta from Shigella flexneri serotype 5b (strain 8401).